The chain runs to 611 residues: Serine protease FAM111A (611 aa).

Positions 16-28 match the PIP-box motif; it reads KCNMKIEHYFSPV. Residue Lys20 forms a Glycyl lysine isopeptide (Lys-Gly) (interchain with G-Cter in SUMO2) linkage. Ser26 bears the Phosphoserine mark. Glycyl lysine isopeptide (Lys-Gly) (interchain with G-Cter in SUMO2) cross-links involve residues Lys30 and Lys65. Residues 44 to 73 are disordered; sequence ESRGDPRATTNTQAQRFHSPKKNPEDQTMP. The interval 336–611 is interaction with SV40 large T antigen; sequence KVTKNSSSIK…DVEMMSDEDL (276 aa). Residues His385, Asp439, and Ser541 each act as charge relay system in the active site.

This sequence belongs to the FAM111 family. As to quaternary structure, interacts (via PIP-box) with PCNA; then interaction is direct. (Microbial infection) Interacts with SV40 virus large T antigen and this interaction is required for efficient viral replication and sustained viral gene expression in restrictive cell types. In terms of assembly, (Microbial infection) Interacts with vaccinia virus protein OPG079; this interaction promotes the degradation of OPG079. In terms of processing, autocatalytically cleaved; activating the protein. Autocatalytic cleavage takes place in trans.

Its subcellular location is the nucleus. It localises to the chromosome. It is found in the cytoplasm. Functionally, single-stranded DNA-binding serine protease that mediates the proteolytic cleavage of covalent DNA-protein cross-links (DPCs) during DNA synthesis, thereby playing a key role in maintaining genomic integrity. DPCs are highly toxic DNA lesions that interfere with essential chromatin transactions, such as replication and transcription, and which are induced by reactive agents, such as UV light or formaldehyde. Protects replication fork from stalling by removing DPCs, such as covalently trapped topoisomerase 1 (TOP1) adducts on DNA lesion, or poly(ADP-ribose) polymerase 1 (PARP1)-DNA complexes trapped by PARP inhibitors. Required for PCNA loading on replication sites. Promotes S-phase entry and DNA synthesis. Also acts as a restriction factor for some viruses including SV40 polyomavirus and vaccinia virus. Mechanistically, affects nuclear barrier function during viral replication by mediating the disruption of the nuclear pore complex (NPC) via its protease activity. In turn, interacts with vaccinia virus DNA-binding protein OPG079 in the cytoplasm and promotes its degradation without the need of its protease activity but through autophagy. This Homo sapiens (Human) protein is Serine protease FAM111A.